We begin with the raw amino-acid sequence, 461 residues long: GTPase Der (461 aa).

2 consecutive EngA-type G domains span residues 9–171 and 200–371; these read KTIA…DLNQ and IQVG…ECFS. GTP-binding positions include 15 to 22, 62 to 66, 123 to 126, 206 to 213, 253 to 257, and 317 to 320; these read GQPNVGKS, DTGGM, NKID, GRVNVGKS, DTAGI, and NKWD. The 85-residue stretch at 372–456 folds into the KH-like domain; sequence KRIPTSLLNS…PLILNAKDKK (85 aa).

This sequence belongs to the TRAFAC class TrmE-Era-EngA-EngB-Septin-like GTPase superfamily. EngA (Der) GTPase family. In terms of assembly, associates with the 50S ribosomal subunit.

Its function is as follows. GTPase that plays an essential role in the late steps of ribosome biogenesis. The polypeptide is GTPase Der (Helicobacter pylori (strain Shi470)).